Consider the following 1366-residue polypeptide: DNA-directed RNA polymerase subunit beta' (1366 aa).

Residues 1 to 23 (MTSSKPKKSSRVRKTSKNSKKNN) show a composition bias toward basic residues. Residues 1–25 (MTSSKPKKSSRVRKTSKNSKKNNKI) form a disordered region. The Zn(2+) site is built by Cys-248, Cys-315, Cys-322, and Cys-325. The interval 1290-1366 (DYTVDMPQSP…LQEEGLLSDE (77 aa)) is disordered. Residues 1295 to 1305 (MPQSPTVSSTA) are compositionally biased toward polar residues. Residues 1354 to 1366 (LEGLQEEGLLSDE) show a composition bias toward low complexity.

This sequence belongs to the RNA polymerase beta' chain family. RpoC2 subfamily. As to quaternary structure, in cyanobacteria the RNAP catalytic core is composed of 2 alpha, 1 beta, 1 beta', 1 gamma and 1 omega subunit. When a sigma factor is associated with the core the holoenzyme is formed, which can initiate transcription. Zn(2+) serves as cofactor.

The catalysed reaction is RNA(n) + a ribonucleoside 5'-triphosphate = RNA(n+1) + diphosphate. Functionally, DNA-dependent RNA polymerase catalyzes the transcription of DNA into RNA using the four ribonucleoside triphosphates as substrates. The sequence is that of DNA-directed RNA polymerase subunit beta' from Prochlorococcus marinus (strain MIT 9515).